Reading from the N-terminus, the 224-residue chain is Probable 2' cyclic ADP-D-ribose synthase BdTIR (224 aa).

The region spanning 51–178 (SRYEVFINHR…RFKFALREAK (128 aa)) is the TIR domain. NAD(+)-binding positions include 60 to 65 (RGVDTK) and Gly93. Glu127 is an active-site residue.

In terms of assembly, homodimer.

The enzyme catalyses NAD(+) + H2O = ADP-D-ribose + nicotinamide + H(+). The catalysed reaction is NADP(+) + H2O = ADP-D-ribose 2'-phosphate + nicotinamide + H(+). It catalyses the reaction NAD(+) = 2'cADPR + nicotinamide + H(+). Functionally, an NAD(+) hydrolase (NADase). Upon activation catalyzes cleavage of NAD(+) into ADP-D-ribose (ADPR) and nicotinamide; NAD(+) cleavage triggers a defense system that promotes cell death. In addition to ADPR, also generates a cyclization variant of cyclic ADPR termed v-cADPR (2'cADPR). Also hydrolyzes NADP(+), but not other NAD(+)-related molecules. v-cADPR activates ThsA, an NAD(+) hydrolase in B.cereus (AC J8G6Z1). Probably makes 2'cADPR; the cADPR made by this protein is bound by cmTad1 (AC P0DW61) and activates ThsA from B.cereus. Boiling cmTad1 bound to the cyclic nucleotide releases 2'cADPR, strongly suggesting it is the product of this protein. In Brachypodium distachyon (Purple false brome), this protein is Probable 2' cyclic ADP-D-ribose synthase BdTIR.